We begin with the raw amino-acid sequence, 205 residues long: Outer-membrane lipoprotein LolB (205 aa).

Residues 1 to 17 (MFLRHCITFTLIALLAG) form the signal peptide. A lipid anchor (N-palmitoyl cysteine) is attached at cysteine 18. Cysteine 18 carries the S-diacylglycerol cysteine lipid modification.

Belongs to the LolB family. As to quaternary structure, monomer.

Its subcellular location is the cell outer membrane. Plays a critical role in the incorporation of lipoproteins in the outer membrane after they are released by the LolA protein. This Pseudomonas putida (strain W619) protein is Outer-membrane lipoprotein LolB.